The sequence spans 267 residues: 3-methyl-2-oxobutanoate hydroxymethyltransferase (267 aa).

Positions 46 and 85 each coordinate Mg(2+). Residues 46 to 47 (DS), Asp-85, and Lys-115 each bind 3-methyl-2-oxobutanoate. A Mg(2+)-binding site is contributed by Glu-117. The active-site Proton acceptor is Glu-184.

The protein belongs to the PanB family. As to quaternary structure, homodecamer; pentamer of dimers. Mg(2+) is required as a cofactor.

Its subcellular location is the cytoplasm. The enzyme catalyses 3-methyl-2-oxobutanoate + (6R)-5,10-methylene-5,6,7,8-tetrahydrofolate + H2O = 2-dehydropantoate + (6S)-5,6,7,8-tetrahydrofolate. The protein operates within cofactor biosynthesis; (R)-pantothenate biosynthesis; (R)-pantoate from 3-methyl-2-oxobutanoate: step 1/2. In terms of biological role, catalyzes the reversible reaction in which hydroxymethyl group from 5,10-methylenetetrahydrofolate is transferred onto alpha-ketoisovalerate to form ketopantoate. This is 3-methyl-2-oxobutanoate hydroxymethyltransferase from Geobacter sulfurreducens (strain ATCC 51573 / DSM 12127 / PCA).